Consider the following 217-residue polypeptide: Small ribosomal subunit protein uS3 (217 aa).

The 71-residue stretch at 40–110 (IRDLINKWFN…EVYINIHEVR (71 aa)) folds into the KH type-2 domain.

It belongs to the universal ribosomal protein uS3 family. As to quaternary structure, part of the 30S ribosomal subunit. Forms a tight complex with proteins S10 and S14.

In terms of biological role, binds the lower part of the 30S subunit head. Binds mRNA in the 70S ribosome, positioning it for translation. The polypeptide is Small ribosomal subunit protein uS3 (Rickettsia prowazekii (strain Madrid E)).